Reading from the N-terminus, the 129-residue chain is Protein FYV12 (129 aa).

The N-linked (GlcNAc...) asparagine glycan is linked to N91. The helical transmembrane segment at 109–128 (LMTTFLLYVLYVCIYISAFI) threads the bilayer.

The protein localises to the membrane. Functionally, involved in K1 killer toxin resistance. The sequence is that of Protein FYV12 (FYV12) from Saccharomyces cerevisiae (strain ATCC 204508 / S288c) (Baker's yeast).